Here is a 320-residue protein sequence, read N- to C-terminus: Ferrochelatase (320 aa).

Residues His-194 and Glu-275 each coordinate Fe cation.

The protein belongs to the ferrochelatase family.

The protein localises to the cytoplasm. It catalyses the reaction heme b + 2 H(+) = protoporphyrin IX + Fe(2+). The protein operates within porphyrin-containing compound metabolism; protoheme biosynthesis; protoheme from protoporphyrin-IX: step 1/1. Its function is as follows. Catalyzes the ferrous insertion into protoporphyrin IX. This chain is Ferrochelatase, found in Xylella fastidiosa (strain M23).